A 394-amino-acid chain; its full sequence is Phosphopentomutase (394 aa).

Residues D14, D287, H292, D328, H329, and H340 each coordinate Mn(2+).

The protein belongs to the phosphopentomutase family. Requires Mn(2+) as cofactor.

Its subcellular location is the cytoplasm. It carries out the reaction 2-deoxy-alpha-D-ribose 1-phosphate = 2-deoxy-D-ribose 5-phosphate. The catalysed reaction is alpha-D-ribose 1-phosphate = D-ribose 5-phosphate. The protein operates within carbohydrate degradation; 2-deoxy-D-ribose 1-phosphate degradation; D-glyceraldehyde 3-phosphate and acetaldehyde from 2-deoxy-alpha-D-ribose 1-phosphate: step 1/2. Isomerase that catalyzes the conversion of deoxy-ribose 1-phosphate (dRib-1-P) and ribose 1-phosphate (Rib-1-P) to deoxy-ribose 5-phosphate (dRib-5-P) and ribose 5-phosphate (Rib-5-P), respectively. This is Phosphopentomutase from Listeria innocua serovar 6a (strain ATCC BAA-680 / CLIP 11262).